The following is a 469-amino-acid chain: 2-amino-4-ketopentanoate thiolase beta subunit (469 aa).

An N6-(pyridoxal phosphate)lysine modification is found at lysine 102. Pyridoxal 5'-phosphate contacts are provided by residues asparagine 128 and 238-242 (AGGGN).

This sequence belongs to the threonine synthase family. In terms of assembly, heterodimer with OrtA. The cofactor is pyridoxal 5'-phosphate.

It catalyses the reaction D-alanine + acetyl-CoA = (2R)-2-amino-4-oxopentanoate + CoA. With respect to regulation, completely inhibited by p-chloromercuribenzoate (p-ClHgBzO) and acetyl-CoA, and partially inhibited by N-ethylmaleimide. Involved in the ornithine fermentation pathway. Catalyzes the thiolytic cleavage of 2-amino-4-ketopentanoate (AKP) with coenzyme A (CoA) to form acetyl-CoA and alanine. It is strictly specific for AKP. The sequence is that of 2-amino-4-ketopentanoate thiolase beta subunit from Acetoanaerobium sticklandii (strain ATCC 12662 / DSM 519 / JCM 1433 / CCUG 9281 / NCIMB 10654 / HF) (Clostridium sticklandii).